The primary structure comprises 257 residues: Phosphatidylglycerol--prolipoprotein diacylglyceryl transferase (257 aa).

A run of 4 helical transmembrane segments spans residues 12-32 (FSIRWYAICIVSGMLLAVYLA), 49-69 (FILMAFPLSIVGARIYYVIFE), 83-103 (IWNGGIAIYGGLITGAILLVI), and 109-129 (LINPIDFLDIAAPGVMIAQAI). Arginine 131 is an a 1,2-diacyl-sn-glycero-3-phospho-(1'-sn-glycerol) binding site. 3 helical membrane-spanning segments follow: residues 167 to 187 (VPTFLYESLWNFLGFVIIMSI), 197 to 217 (GEVACFYLVWYGCGRFIIEGM), and 226 to 246 (GLRVSQWLSVILVIIGIVMII).

Belongs to the Lgt family.

It is found in the cell membrane. The catalysed reaction is L-cysteinyl-[prolipoprotein] + a 1,2-diacyl-sn-glycero-3-phospho-(1'-sn-glycerol) = an S-1,2-diacyl-sn-glyceryl-L-cysteinyl-[prolipoprotein] + sn-glycerol 1-phosphate + H(+). It functions in the pathway protein modification; lipoprotein biosynthesis (diacylglyceryl transfer). In terms of biological role, catalyzes the transfer of the diacylglyceryl group from phosphatidylglycerol to the sulfhydryl group of the N-terminal cysteine of a prolipoprotein, the first step in the formation of mature lipoproteins. The polypeptide is Phosphatidylglycerol--prolipoprotein diacylglyceryl transferase (Streptococcus agalactiae serotype Ia (strain ATCC 27591 / A909 / CDC SS700)).